Consider the following 1098-residue polypeptide: WD repeat-containing protein 72 (1098 aa).

WD repeat units lie at residues 15 to 54 (APPH…KISA), 60 to 102 (GHSA…CVEK), 158 to 196 (WINC…NSIQ), 315 to 359 (ENKN…VSKF), 399 to 438 (AGTA…KARL), 456 to 501 (GHHQ…ILHK), 504 to 549 (LEAG…CLLR), and 552 to 591 (KHLF…LERH). Phosphoserine occurs at positions 1077 and 1079.

It localises to the cytoplasmic vesicle. Plays a major role in formation of tooth enamel. Specifically required during the maturation phase of amelogenesis for normal formation of the enamel matrix and clearance of enamel proteins. May be involved in localization of the calcium transporter SLC24A4 to the ameloblast cell membrane. The sequence is that of WD repeat-containing protein 72 (WDR72) from Pongo abelii (Sumatran orangutan).